We begin with the raw amino-acid sequence, 410 residues long: MAKGTYEGNKTHVNVGTIGHVDHGKTTLTSAITAVSSAMFPATVQKVAYDSVAKASESQGRRDPTKILTIATSHVEYESDNRHYAHVDCPGHADYIKNMITGAAQMDGAILVVSAEDGVMPQTKEHVLLSRQVGVNYIVVFLNKCDKLDDPEMAEIVEAEVIDVLDHYGFDGSKTPIIRGSAIKAIQAIEAGKDPRTDPDCKCILDLLNALDTYIPDPVREVDKDFLMSIEDVYSIPGRGTVVTGRIERGKIEKGNEVEIVGIRPTQKTTCTGVEMFKKEVVGIAGYNVGCLLRGIERKAVERGQVLAKPGTITPHKKFEAEVYILKKEEGGRHSGFVSGYRPQMYFRTTDVTGVINLQGDAQMIMPGDNANLTIELITPIAMEEKQRFAIREGGKTVGNGVVTKNIRII.

The tr-type G domain occupies 10-219 (KTHVNVGTIG…ALDTYIPDPV (210 aa)). Residues 19–26 (GHVDHGKT), 88–92 (DCPGH), and 143–146 (NKCD) each bind GTP. Thr26 serves as a coordination point for Mg(2+).

The protein belongs to the TRAFAC class translation factor GTPase superfamily. Classic translation factor GTPase family. EF-Tu/EF-1A subfamily. As to quaternary structure, monomer.

The protein resides in the cytoplasm. The enzyme catalyses GTP + H2O = GDP + phosphate + H(+). GTP hydrolase that promotes the GTP-dependent binding of aminoacyl-tRNA to the A-site of ribosomes during protein biosynthesis. This chain is Elongation factor Tu, found in Brachyspira hyodysenteriae (Treponema hyodysenteriae).